The sequence spans 238 residues: 2-C-methyl-D-erythritol 4-phosphate cytidylyltransferase (238 aa).

Belongs to the IspD/TarI cytidylyltransferase family. IspD subfamily.

The enzyme catalyses 2-C-methyl-D-erythritol 4-phosphate + CTP + H(+) = 4-CDP-2-C-methyl-D-erythritol + diphosphate. Its pathway is isoprenoid biosynthesis; isopentenyl diphosphate biosynthesis via DXP pathway; isopentenyl diphosphate from 1-deoxy-D-xylulose 5-phosphate: step 2/6. In terms of biological role, catalyzes the formation of 4-diphosphocytidyl-2-C-methyl-D-erythritol from CTP and 2-C-methyl-D-erythritol 4-phosphate (MEP). This is 2-C-methyl-D-erythritol 4-phosphate cytidylyltransferase from Acinetobacter baumannii (strain ATCC 17978 / DSM 105126 / CIP 53.77 / LMG 1025 / NCDC KC755 / 5377).